The primary structure comprises 460 residues: MSIDIKFTINDILFNQESLQKKNKYTCPICFEFIYKKQIYQCKSGHHACKECWEKSLETKKECMTCKSVVNSYNDLSRCLMVERAFDKKECCCIYSFNEQIVEGGTNCSPPDGASDQNQRKLIKDEENGCKEKIEVDQIDSHLINCQYKFVTCSFKGCEKILRMNSLESHQNECGFKLVTCDFCKRDDIKKKELETHYKTCPMVPIDCSQGCSVKIERKSIIDHIENDCCNTQIPCKYFEQGCKVEMKRSELQNHLERVNHQNYMGILIEKLTNQVGQSKKTHDELLKKIEDLSLLVIKFSDACLKKQVLPKALDICSNGYRNKWIISNYSSVAKSKLNCQALSSPMLSILSHLFQVCVYPKGDENKEYISLYLRVNNIEEPNSLKVEYSFTLVNVLDKSKSITKKEDKKVFISSEGWGWGKFLLSDLINKENGWLSNDDKLIIEIYIKILNEEYEPLES.

Residues 27-67 (CPICFEFIYKKQIYQCKSGHHACKECWEKSLETKKECMTCK) form an RING-type zinc finger. 2 TRAF-type zinc fingers span residues 141 to 194 (SHLI…KKEL) and 196 to 253 (THYK…SELQ). Residues 269–294 (IEKLTNQVGQSKKTHDELLKKIEDLS) are a coiled coil. The 129-residue stretch at 320–448 (GYRNKWIISN…DDKLIIEIYI (129 aa)) folds into the MATH domain.

Belongs to the TNF receptor-associated factor family. A subfamily.

It localises to the cytoplasm. In terms of biological role, probable adapter protein and signal transducer that links members of the tumor necrosis factor receptor family to different signaling pathways by association with the receptor cytoplasmic domain and kinases. In Dictyostelium discoideum (Social amoeba), this protein is RING finger protein DG17 (zfaA).